The sequence spans 80 residues: Exodeoxyribonuclease 7 small subunit (80 aa).

Belongs to the XseB family. In terms of assembly, heterooligomer composed of large and small subunits.

It localises to the cytoplasm. It catalyses the reaction Exonucleolytic cleavage in either 5'- to 3'- or 3'- to 5'-direction to yield nucleoside 5'-phosphates.. Functionally, bidirectionally degrades single-stranded DNA into large acid-insoluble oligonucleotides, which are then degraded further into small acid-soluble oligonucleotides. The protein is Exodeoxyribonuclease 7 small subunit of Vibrio atlanticus (strain LGP32) (Vibrio splendidus (strain Mel32)).